Reading from the N-terminus, the 210-residue chain is Syntaxin-binding protein 6 (210 aa).

The residue at position 2 (Ser-2) is an N-acetylserine. Residues 151 to 210 (GNSILHSAADSVTSAVQKASQALNERGERLGRAEEKTEDMKNSAQQFAETAHKLAMKHKC) enclose the v-SNARE coiled-coil homology domain.

Part of a ternary complex containing SNAP25 and STX1A that can be dissociated by NAPA and NSF. Interacts with STX4A.

It localises to the cytoplasm. The protein resides in the membrane. Forms non-fusogenic complexes with SNAP25 and STX1A and may thereby modulate the formation of functional SNARE complexes and exocytosis. The polypeptide is Syntaxin-binding protein 6 (Stxbp6) (Mus musculus (Mouse)).